Reading from the N-terminus, the 1019-residue chain is Alpha-mannosidase At3g26720 (1019 aa).

A signal peptide spans 1–22 (MAVKCFSLYLILAAIVIGGVTS). Positions 47 and 49 each coordinate Zn(2+). N64 carries an N-linked (GlcNAc...) asparagine glycan. D169 contributes to the Zn(2+) binding site. N-linked (GlcNAc...) asparagine glycans are attached at residues N278 and N336. H410 contacts Zn(2+). C466 and C474 form a disulfide bridge. N-linked (GlcNAc...) asparagine glycosylation is found at N470, N638, N730, and N820. C824 and C829 are oxidised to a cystine.

It belongs to the glycosyl hydrolase 38 family. In terms of assembly, homodimer. The cofactor is Zn(2+).

The catalysed reaction is Hydrolysis of terminal, non-reducing alpha-D-mannose residues in alpha-D-mannosides.. Its function is as follows. Liberates mannose from p-nitrophenyl-alpha-D-mannoside in vitro. This chain is Alpha-mannosidase At3g26720, found in Arabidopsis thaliana (Mouse-ear cress).